A 93-amino-acid chain; its full sequence is MPQHKSAEKRVRQSKRRNARNRVHKAEMKKLVKTVKGLIEKSAEKEEVENAYRAAIQKLDRMAVKGYLHKNNASNKKSKLSKLVNRFSKGDAA.

Positions 1–11 (MPQHKSAEKRV) are enriched in basic and acidic residues. Residues 1 to 23 (MPQHKSAEKRVRQSKRRNARNRV) are disordered. A compositionally biased stretch (basic residues) spans 12–23 (RQSKRRNARNRV).

Belongs to the bacterial ribosomal protein bS20 family.

Binds directly to 16S ribosomal RNA. This is Small ribosomal subunit protein bS20 from Chloroherpeton thalassium (strain ATCC 35110 / GB-78).